Consider the following 607-residue polypeptide: UvrABC system protein C (607 aa).

Residues 16 to 94 enclose the GIY-YIG domain; sequence GRPGVYRMFD…IKEWRPPYNI (79 aa). Residues 203–238 enclose the UVR domain; that stretch reads NALSDELNATMEKAAMALDFERAAELRDQVALLRRV.

The protein belongs to the UvrC family. As to quaternary structure, interacts with UvrB in an incision complex.

The protein resides in the cytoplasm. Functionally, the UvrABC repair system catalyzes the recognition and processing of DNA lesions. UvrC both incises the 5' and 3' sides of the lesion. The N-terminal half is responsible for the 3' incision and the C-terminal half is responsible for the 5' incision. The sequence is that of UvrABC system protein C from Pseudomonas savastanoi pv. phaseolicola (strain 1448A / Race 6) (Pseudomonas syringae pv. phaseolicola (strain 1448A / Race 6)).